Reading from the N-terminus, the 442-residue chain is Threonine/serine transporter TdcC (442 aa).

Transmembrane regions (helical) follow at residues 21–41, 44–64, 96–116, 139–159, 162–182, 206–226, 258–278, 312–332, 364–384, 388–408, and 422–442; these read TTWT…FFPI, GFGG…IAFL, GVVI…IYGV, VVAL…KDLM, VMSF…LSLI, ILVT…FSPI, ASIL…FTLS, ITLE…SFFG, LISM…NPNI, IEAM…MYAI, and ENYF…YKLL.

Belongs to the amino acid/polyamine transporter 2 family. SdaC/TdcC subfamily.

The protein resides in the cell inner membrane. It carries out the reaction L-threonine(in) + H(+)(in) = L-threonine(out) + H(+)(out). The catalysed reaction is L-serine(in) + H(+)(in) = L-serine(out) + H(+)(out). Involved in the import of threonine and serine into the cell, with the concomitant import of a proton (symport system). The chain is Threonine/serine transporter TdcC from Yersinia enterocolitica serotype O:8 / biotype 1B (strain NCTC 13174 / 8081).